The sequence spans 428 residues: Light-independent protochlorophyllide reductase subunit N (428 aa).

The [4Fe-4S] cluster site is built by Cys-29, Cys-54, and Cys-115.

The protein belongs to the BchN/ChlN family. In terms of assembly, protochlorophyllide reductase is composed of three subunits; BchL, BchN and BchB. Forms a heterotetramer of two BchB and two BchN subunits. The cofactor is [4Fe-4S] cluster.

The catalysed reaction is chlorophyllide a + oxidized 2[4Fe-4S]-[ferredoxin] + 2 ADP + 2 phosphate = protochlorophyllide a + reduced 2[4Fe-4S]-[ferredoxin] + 2 ATP + 2 H2O. Its pathway is porphyrin-containing compound metabolism; bacteriochlorophyll biosynthesis (light-independent). In terms of biological role, component of the dark-operative protochlorophyllide reductase (DPOR) that uses Mg-ATP and reduced ferredoxin to reduce ring D of protochlorophyllide (Pchlide) to form chlorophyllide a (Chlide). This reaction is light-independent. The NB-protein (BchN-BchB) is the catalytic component of the complex. The polypeptide is Light-independent protochlorophyllide reductase subunit N (Cereibacter sphaeroides (strain ATCC 17025 / ATH 2.4.3) (Rhodobacter sphaeroides)).